Here is a 143-residue protein sequence, read N- to C-terminus: Holo-[acyl-carrier-protein] synthase (143 aa).

The Mg(2+) site is built by Asp9 and Glu63.

The protein belongs to the P-Pant transferase superfamily. AcpS family. The cofactor is Mg(2+).

The protein localises to the cytoplasm. It catalyses the reaction apo-[ACP] + CoA = holo-[ACP] + adenosine 3',5'-bisphosphate + H(+). Functionally, transfers the 4'-phosphopantetheine moiety from coenzyme A to a Ser of acyl-carrier-protein. The polypeptide is Holo-[acyl-carrier-protein] synthase (Burkholderia mallei (strain NCTC 10247)).